Here is a 482-residue protein sequence, read N- to C-terminus: ATP synthase subunit beta (482 aa).

Residue 162-169 (GGAGVGKT) coordinates ATP.

As to quaternary structure, F-type ATPases have 2 components, CF(1) - the catalytic core - and CF(0) - the membrane proton channel. CF(1) has five subunits: alpha(3), beta(3), gamma(1), delta(1), epsilon(1). CF(0) has four main subunits: a(1), b(1), b'(1) and c(9-12).

It localises to the cellular thylakoid membrane. The catalysed reaction is ATP + H2O + 4 H(+)(in) = ADP + phosphate + 5 H(+)(out). With respect to regulation, inhibited by dicyclohexylcarbodiimide. Functionally, produces ATP from ADP in the presence of a proton gradient across the membrane. The catalytic sites are hosted primarily by the beta subunits. In terms of biological role, the complex from the organism is particularly stable to disruption and remains functional after 6 hrs at 55 degrees Celsius. In Thermosynechococcus vestitus (strain NIES-2133 / IAM M-273 / BP-1), this protein is ATP synthase subunit beta.